The chain runs to 404 residues: Glycosylated lysosomal membrane protein (404 aa).

Positions 1–26 (MSGYEKPSRGWGFCALSPVLLSLLMA) are cleaved as a signal peptide. The Lumenal portion of the chain corresponds to 27 to 370 (APLGLLGEET…VDALSPLVLG (344 aa)). N63, N132, N157, N185, and N228 each carry an N-linked (GlcNAc...) asparagine glycan. Residues 371 to 391 (IMAVALGAPALMLLAGGLFLL) traverse the membrane as a helical segment. At 392–404 (LGRKRDSEYQSIN) the chain is on the cytoplasmic side. A Lysosomal targeting motif motif is present at residues 400–404 (YQSIN).

Belongs to the GLMP family. As to quaternary structure, interacts (via lumenal domain) with lysosomal protein MFSD1; the interaction starts while both proteins are still in the endoplasmic reticulum and is required for stabilization of MFSD1 in lysosomes but has no direct effect on its targeting to lysosomes or transporter activity. Post-translationally, highly N-glycosylated. N-glycosylation is essential for GLMP stability and for MFSD1 lysosomal localization.

It is found in the lysosome membrane. Required to protect lysosomal transporter MFSD1 from lysosomal proteolysis and for MFSD1 lysosomal localization. The polypeptide is Glycosylated lysosomal membrane protein (Bos taurus (Bovine)).